The sequence spans 248 residues: Probable transcriptional regulatory protein Dde_2325 (248 aa).

The span at 1 to 15 (MAGHSKWKNIQHRKG) shows a compositional bias: basic residues. Residues 1–22 (MAGHSKWKNIQHRKGRQDAKKS) form a disordered region.

It belongs to the TACO1 family.

It localises to the cytoplasm. The protein is Probable transcriptional regulatory protein Dde_2325 of Oleidesulfovibrio alaskensis (strain ATCC BAA-1058 / DSM 17464 / G20) (Desulfovibrio alaskensis).